A 232-amino-acid polypeptide reads, in one-letter code: F420-dependent NADP reductase (232 aa).

Residues 15-18 (TGDQ), 37-38 (SR), Lys-42, Val-80, Val-106, and Ala-151 contribute to the NADP(+) site.

Belongs to the F420-dependent NADP reductase family. As to quaternary structure, homotetramer.

It catalyses the reaction reduced coenzyme F420-(gamma-L-Glu)(n) + NADP(+) = oxidized coenzyme F420-(gamma-L-Glu)(n) + NADPH + 2 H(+). Catalyzes the reduction of NADP(+) with F420H(2) via hydride transfer, and likely the reverse reaction, i.e. the reduction of F420 with NADPH. Probably functions in the regeneration of NADPH required in biosynthetic reactions. Is specific for reduced F420 as electron donor for the reduction of NADP; neither reduced FAD nor FMN can act as electron donor. The enzyme is also specific for NADP; NAD is not utilized as substrate. This is F420-dependent NADP reductase (fno) from Methanothermobacter thermautotrophicus (strain ATCC 29096 / DSM 1053 / JCM 10044 / NBRC 100330 / Delta H) (Methanobacterium thermoautotrophicum).